The primary structure comprises 389 residues: Glutamate 5-kinase (389 aa).

Lys-16 is an ATP binding site. Positions 56, 143, and 155 each coordinate substrate. Residue Ser-175 to Asp-176 participates in ATP binding. The region spanning Ala-281–Pro-358 is the PUA domain.

The protein belongs to the glutamate 5-kinase family.

Its subcellular location is the cytoplasm. The enzyme catalyses L-glutamate + ATP = L-glutamyl 5-phosphate + ADP. It participates in amino-acid biosynthesis; L-proline biosynthesis; L-glutamate 5-semialdehyde from L-glutamate: step 1/2. Catalyzes the transfer of a phosphate group to glutamate to form L-glutamate 5-phosphate. The sequence is that of Glutamate 5-kinase from Rhizobium leguminosarum bv. trifolii (strain WSM2304).